The following is a 256-amino-acid chain: Protein crossbronx-like (256 aa).

The UBC core domain occupies 17–179; sequence NQGYQVLAEY…AKASIVWSWK (163 aa).

Belongs to the ubiquitin-conjugating enzyme family. FTS subfamily.

In Drosophila mojavensis (Fruit fly), this protein is Protein crossbronx-like.